The sequence spans 316 residues: Metal tolerance protein 8 (316 aa).

Topologically, residues 1–15 are cytoplasmic; sequence MGPVRHILNERKSRK. The chain crosses the membrane as a helical span at residues 16 to 36; it reads IAAFLLINTAYMFVEFTSGFM. Over 37–45 the chain is Vacuolar; it reads SDSLGLISD. Residues 46 to 66 form a helical membrane-spanning segment; that stretch reads ACHMLFDCAALAIGLYASYIA. Topologically, residues 67–80 are cytoplasmic; the sequence is RLPANGLYNYGRGR. The chain crosses the membrane as a helical span at residues 81 to 101; it reads FEVLSGYVNAVFLVLVGALIV. At 102-116 the chain is on the vacuolar side; sequence LESFERILEPREIST. Residues 117 to 137 form a helical membrane-spanning segment; sequence SSLLTVSIGGLVVNVIGLVFF. At 138–176 the chain is on the cytoplasmic side; it reads HEEHHHAHGEAHSCNGGLQSSENHNKSRNRHHIDHNMEG. A disordered region spans residues 147–166; the sequence is EAHSCNGGLQSSENHNKSRN. A helical transmembrane segment spans residues 177–197; it reads IFLHVLADTMGSVGVVISTLL. The Vacuolar segment spans residues 198 to 202; sequence IKYKG. A helical membrane pass occupies residues 203–223; it reads WLIADPICSVFISIMIVSSVL. Over 224–316 the chain is Cytoplasmic; sequence PLLRNSAEIL…LTIQIECVKR (93 aa).

It belongs to the cation diffusion facilitator (CDF) transporter (TC 2.A.4) family. SLC30A subfamily.

The protein localises to the vacuole membrane. Its function is as follows. Involved in sequestration of excess metal in the cytoplasm into vacuoles to maintain metal homeostasis. This chain is Metal tolerance protein 8 (MTP8), found in Oryza sativa subsp. japonica (Rice).